The primary structure comprises 391 residues: Putative 1-acyl-sn-glycerol-3-phosphate acyltransferase acl-12 (391 aa).

The next 2 helical transmembrane spans lie at 47-67 (FFFM…SLLF) and 84-104 (LCAM…ATVT). An HXXXXD motif motif is present at residues 124–129 (HLGLLD).

This sequence belongs to the 1-acyl-sn-glycerol-3-phosphate acyltransferase family.

It localises to the membrane. The enzyme catalyses a 1-acyl-sn-glycero-3-phosphate + an acyl-CoA = a 1,2-diacyl-sn-glycero-3-phosphate + CoA. Its pathway is phospholipid metabolism; CDP-diacylglycerol biosynthesis; CDP-diacylglycerol from sn-glycerol 3-phosphate: step 2/3. In terms of biological role, converts lysophosphatidic acid (LPA) into phosphatidic acid by incorporating an acyl moiety at the sn-2 position of the glycerol backbone. This is Putative 1-acyl-sn-glycerol-3-phosphate acyltransferase acl-12 (acl-12) from Caenorhabditis elegans.